The following is a 340-amino-acid chain: Very-long-chain 3-oxoacyl-CoA reductase (340 aa).

The helical transmembrane segment at 23-43 (LQYTFAALGALYVLRGALSFV) threads the bilayer. Residues Val68, Arg109, Asp123, Asp131, Asn150, Lys185, Tyr217, Lys221, Val250, and Thr252 each contribute to the NADP(+) site. The active-site Proton donor is Tyr217. The active-site Lowers pKa of active site Tyr is Lys221.

This sequence belongs to the short-chain dehydrogenases/reductases (SDR) family.

The protein localises to the endoplasmic reticulum membrane. It catalyses the reaction a very-long-chain (3R)-3-hydroxyacyl-CoA + NADP(+) = a very-long-chain 3-oxoacyl-CoA + NADPH + H(+). Its pathway is lipid metabolism; fatty acid biosynthesis. Its function is as follows. Component of the microsomal membrane bound fatty acid elongation system, which produces the 26-carbon very long-chain fatty acids (VLCFA) from palmitate. Catalyzes the reduction of the 3-ketoacyl-CoA intermediate that is formed in each cycle of fatty acid elongation. VLCFAs serve as precursors for ceramide and sphingolipids. This chain is Very-long-chain 3-oxoacyl-CoA reductase, found in Podospora anserina (strain S / ATCC MYA-4624 / DSM 980 / FGSC 10383) (Pleurage anserina).